Here is a 134-residue protein sequence, read N- to C-terminus: Secretin (134 aa).

A signal peptide spans 1 to 21; the sequence is MATRALLLLLLLPPLLLLAGC. Positions 22–31 are excised as a propeptide; the sequence is AARPAPPRAP. The residue at position 59 (Val59) is a Valine amide. Ser63 is subject to Phosphoserine. The propeptide occupies 63-134; sequence SQQDPENNTA…PAAEGSPMPP (72 aa).

The protein belongs to the glucagon family.

It localises to the secreted. Functionally, hormone involved in different processes, such as regulation of the pH of the duodenal content, food intake and water homeostasis. Exerts its biological effects by binding to secretin receptor (SCTR), a G-protein coupled receptor expressed in the basolateral domain of several cells. Acts as a key gastrointestinal hormone by regulating the pH of the duodenal content. Secreted by S cells of the duodenum in the crypts of Lieberkuehn and regulates the pH of the duodenum by (1) inhibiting the secretion of gastric acid from the parietal cells of the stomach and (2) stimulating the production of bicarbonate (NaHCO(3)) from the ductal cells of the pancreas. Production of bicarbonate is essential to neutralize the pH and ensure no damage is done to the small intestine by the gastric acid. In addition to regulating the pH of the duodenal content, plays a central role in diet induced thermogenesis: acts as a non-sympathetic brown fat (BAT) activator mediating prandial thermogenesis, which consequentially induces satiation. Mechanistically, secretin released by the gut after a meal binds to secretin receptor (SCTR) in brown adipocytes, activating brown fat thermogenesis by stimulating lipolysis, which is sensed in the brain and promotes satiation. Also able to stimulate lipolysis in white adipocytes. Also plays an important role in cellular osmoregulation: released into the systemic circulation in response to hyperosmolality and acts at different levels in the hypothalamus, pituitary and kidney to regulate water homeostasis. Also plays a role in the central nervous system, possibly by acting as a neuropeptide hormone: required for hippocampal synaptic function and neural progenitor cells maintenance. This Sus scrofa (Pig) protein is Secretin.